Here is a 414-residue protein sequence, read N- to C-terminus: MSATALSRLNPVSQFGFQRIVAGKSKSFFSNSGQRRLFSDSSRFRQAMAASGSLPVFGDACLDDLVTTCSNGLDFTKKRSSGGSFTINCPVASMRLGKRGGMMKNRLVCHYSVVDPLEKSRALFGTLSKSVHTSPMACFSVGPAHELSSLNGGSQESPPTTTTSLKSLRLVSGSCYLPHPEKEATGGEDAHFICDEEQAIGVADGVGGWAEVGVNAGLFSRELMSYSVSAIQEQHKGSSIDPLVVLEKAHSQTKAKGSSTACIIVLKDKGLHAINLGDSGFTVVREGTTVFQSPVQQHGFNFTYQLESGNSADVPSSGQVFTIDVQSGDVIVAGTDGVYDNLYNEEITGVVVSSVRAGLDPKGTAQKIAELARQRAVDKKRQSPFATAAQEAGYRYYGGKLDDITAVVSYVTSS.

The PPM-type phosphatase domain maps to 174–411 (SCYLPHPEKE…DDITAVVSYV (238 aa)). 4 residues coordinate Mn(2+): Asp-204, Gly-205, Asp-336, and Asp-402.

Belongs to the PP2C family. Mg(2+) is required as a cofactor. Requires Mn(2+) as cofactor.

It carries out the reaction O-phospho-L-seryl-[protein] + H2O = L-seryl-[protein] + phosphate. The catalysed reaction is O-phospho-L-threonyl-[protein] + H2O = L-threonyl-[protein] + phosphate. This Arabidopsis thaliana (Mouse-ear cress) protein is Probable protein phosphatase 2C 80.